The following is a 311-amino-acid chain: Ribose-phosphate pyrophosphokinase (311 aa).

Residues 37–39 (DGE) and 96–97 (RQ) each bind ATP. Mg(2+) is bound by residues histidine 130 and aspartate 170. Lysine 193 is an active-site residue. D-ribose 5-phosphate contacts are provided by residues arginine 195, aspartate 219, and 223–227 (DTAGT).

The protein belongs to the ribose-phosphate pyrophosphokinase family. Class I subfamily. In terms of assembly, homohexamer. Mg(2+) serves as cofactor.

The protein resides in the cytoplasm. The enzyme catalyses D-ribose 5-phosphate + ATP = 5-phospho-alpha-D-ribose 1-diphosphate + AMP + H(+). It participates in metabolic intermediate biosynthesis; 5-phospho-alpha-D-ribose 1-diphosphate biosynthesis; 5-phospho-alpha-D-ribose 1-diphosphate from D-ribose 5-phosphate (route I): step 1/1. Functionally, involved in the biosynthesis of the central metabolite phospho-alpha-D-ribosyl-1-pyrophosphate (PRPP) via the transfer of pyrophosphoryl group from ATP to 1-hydroxyl of ribose-5-phosphate (Rib-5-P). This Aquifex aeolicus (strain VF5) protein is Ribose-phosphate pyrophosphokinase.